The chain runs to 618 residues: UvrABC system protein C (618 aa).

In terms of domain architecture, GIY-YIG spans 20–98; that stretch reads TAPGVYRMYA…IKSLSPRYNV (79 aa). Residues 207 to 242 enclose the UVR domain; sequence DQLGEEIMHSMQQASEALEFERAARLRDLLSSLRSM.

The protein belongs to the UvrC family. As to quaternary structure, interacts with UvrB in an incision complex.

It localises to the cytoplasm. Functionally, the UvrABC repair system catalyzes the recognition and processing of DNA lesions. UvrC both incises the 5' and 3' sides of the lesion. The N-terminal half is responsible for the 3' incision and the C-terminal half is responsible for the 5' incision. This chain is UvrABC system protein C, found in Xanthomonas campestris pv. campestris (strain B100).